The chain runs to 299 residues: MAEEQARHVKNGLECIRALKAEPIGSLAIEEAMAAWSEISDNPGQERATCREEKAGSSGLSKPCLSAIGSTEGGAPRIRGQGPGESDDDAETLGIPPRNLQASSTGLQCYYVYDHSGEAVKGIQDADSIMVQSGLDGDSTLSGGDNESENSDVDIGEPDTEGYAITDRGSAPISMGFRASDVETAEGGEIHELLRLQSRGNNFPKLGKTLNVPPPPDPGRASTSETPIKKGHRREISLIWNGDRVFIDRWCNPMCSKVTLGTIRARCTCGECPRVCEQCRTDTGVDTRIWYHNLPEIPE.

Residues 41–99 (DNPGQERATCREEKAGSSGLSKPCLSAIGSTEGGAPRIRGQGPGESDDDAETLGIPPRN) form a disordered region. The interval 110 to 120 (YYVYDHSGEAV) is interaction with host STAT1. The segment covering 134-145 (GLDGDSTLSGGD) has biased composition (low complexity). The tract at residues 134–168 (GLDGDSTLSGGDNESENSDVDIGEPDTEGYAITDR) is disordered. Residues 146-160 (NESENSDVDIGEPDT) are compositionally biased toward acidic residues. Zn(2+) contacts are provided by histidine 232, cysteine 251, cysteine 255, cysteine 267, cysteine 269, cysteine 272, cysteine 276, and cysteine 279.

Belongs to the paramyxoviruses V protein family. Interacts with host IFIH1/MDA5 and DHX58/LGP2; these interactions are involved in the inhibition of the host type I interferon signaling pathway. Interacts with host TYK2; this interaction inhibits the type I interferon signaling pathway without affecting the type II pathway. Interacts with host IRF7; this interaction inhibits IRF7 translocation to the nucleus. Interacts with host CHUK. Interacts with host RELA/p65; this interaction inhibits the nuclear translocation of NF-KappaB. Interacts (via N-terminus) with host STAT1 and JAK1; these interactions inhibit STAT1 phosphorylation by Jak1 and thereby the type I interferon signaling pathway. Interacts (via C-terminus) with host STAT2; this interaction is involved in the inhibition of the host type I interferon signaling pathway. Forms a complex with host PPP1CA and PPP1CC; this interaction prevents dephosphorylation of host IFIH1/MDA5 and leads to the inhibition of the host type I interferon signaling pathway. Interacts with host IRF9; this interaction prevents the binding of IRF9 to STAT2 and thereby the type I interferon signaling pathway. Interacts with host RIGI regulatory protein (via CARDs domain) and host TRIM25 (via SPRY domain); these interactions prevent TRIM25-mediated ubiquitination of RIG-I and disrupts downstream RIG-I signaling.

Its subcellular location is the host cytoplasm. Its function is as follows. Plays an essential role in the inhibition of host immune response. Prevents the establishment of cellular antiviral state by blocking interferon-alpha/beta (IFN-alpha/beta) production and signaling pathway. Interacts with host IFIH1/MDA5 and DHX58/LGP2 to inhibit the transduction pathway involved in the activation of IFN-beta promoter, thus protecting the virus against cell antiviral state. Blocks the type I interferon signaling pathway by interacting with host TYK2 and thereby inhibiting downstream STAT1 and STAT2 phosphorylation. Blocks the type I interferon signaling pathway by disrupting the RIG-I signaling pathway. Moderately affects the type II interferon signaling. Prevents PP1alpha/gamma-mediated dephosphorylation of host IFIH1/MDA5 and thus blocks its activation. The chain is Non-structural protein V (P/V) from Measles virus (strain Edmonston) (MeV).